A 220-amino-acid chain; its full sequence is Coat protein TP4 (220 aa).

It localises to the virion. The sequence is that of Coat protein TP4 from Thermoproteus tenax (TTV1).